A 252-amino-acid polypeptide reads, in one-letter code: Cysteine-rich repeat secretory protein 38 (252 aa).

Residues 1–27 (MSSLKRIVWFPILAIAIQILSIHTVLS) form the signal peptide. 2 Gnk2-homologous domains span residues 34-136 (FLFH…STNF) and 142-248 (FENR…IYPF).

Belongs to the cysteine-rich repeat secretory protein family.

Its subcellular location is the secreted. The protein is Cysteine-rich repeat secretory protein 38 (CRRSP38) of Arabidopsis thaliana (Mouse-ear cress).